The chain runs to 209 residues: Pyridoxine/pyridoxamine 5'-phosphate oxidase (209 aa).

Substrate is bound by residues 7 to 10 (REDY) and lysine 64. FMN-binding positions include 59–64 (RIVLLK), 74–75 (FT), arginine 80, and lysine 81. 3 residues coordinate substrate: tyrosine 121, arginine 125, and serine 129. FMN-binding positions include 138 to 139 (QS) and tryptophan 182. A substrate-binding site is contributed by 188 to 190 (RLH). Residue arginine 192 participates in FMN binding.

This sequence belongs to the pyridoxamine 5'-phosphate oxidase family. As to quaternary structure, homodimer. FMN serves as cofactor.

It carries out the reaction pyridoxamine 5'-phosphate + O2 + H2O = pyridoxal 5'-phosphate + H2O2 + NH4(+). The catalysed reaction is pyridoxine 5'-phosphate + O2 = pyridoxal 5'-phosphate + H2O2. Its pathway is cofactor metabolism; pyridoxal 5'-phosphate salvage; pyridoxal 5'-phosphate from pyridoxamine 5'-phosphate: step 1/1. It participates in cofactor metabolism; pyridoxal 5'-phosphate salvage; pyridoxal 5'-phosphate from pyridoxine 5'-phosphate: step 1/1. Catalyzes the oxidation of either pyridoxine 5'-phosphate (PNP) or pyridoxamine 5'-phosphate (PMP) into pyridoxal 5'-phosphate (PLP). This chain is Pyridoxine/pyridoxamine 5'-phosphate oxidase, found in Actinobacillus pleuropneumoniae serotype 3 (strain JL03).